The following is a 148-amino-acid chain: Sporulation inhibitor of replication protein SirA (148 aa).

Belongs to the SirA family. In terms of assembly, interacts with DnaA. Forms a 1:1 complex with domain I of DnaA.

It localises to the cytoplasm. Its function is as follows. Inhibits DNA replication initiation during sporulation, preventing overinitiation and thus enforcing diploidy; probably the main regulator of sporulation replication initiation under Spo0A control. During sporulation SirA prevents DnaA association with the replication origin to prevent excessive chromosome replication. Alternatively SirA binds to domain I of DnaA and prevent its interaction with DnaD, preventing DNA replication initiation. Upon ectopic expression during vegetative growth reduces chromosome copy number, leading to elongated cells with that can have a single nucleoid or be anucleate. Ectopic expression during vegetative growth blocks DnaA at oriC while blocking recruitment of DnaD to oriC. Plays a significant role during the onset of sporulation. The chain is Sporulation inhibitor of replication protein SirA from Bacillus subtilis (strain 168).